Here is a 39-residue protein sequence, read N- to C-terminus: Cygnin (39 aa).

At Gln1 the chain carries Pyrrolidone carboxylic acid. Intrachain disulfides connect Cys6–Cys33, Cys12–Cys28, and Cys16–Cys32.

The protein belongs to the transferrin family.

This is Cygnin from Cygnus atratus (Black swan).